A 24-amino-acid chain; its full sequence is Humanin-like 12 (24 aa).

The protein belongs to the humanin family.

The protein localises to the secreted. Its subcellular location is the cytoplasm. Functionally, plays a role as a neuroprotective and antiapoptotic factor. The chain is Humanin-like 12 from Homo sapiens (Human).